The following is a 168-amino-acid chain: S-ribosylhomocysteine lyase (168 aa).

Residues histidine 54, histidine 58, and cysteine 128 each contribute to the Fe cation site.

Belongs to the LuxS family. As to quaternary structure, homodimer. The cofactor is Fe cation.

The enzyme catalyses S-(5-deoxy-D-ribos-5-yl)-L-homocysteine = (S)-4,5-dihydroxypentane-2,3-dione + L-homocysteine. Its function is as follows. Involved in the synthesis of autoinducer 2 (AI-2) which is secreted by bacteria and is used to communicate both the cell density and the metabolic potential of the environment. The regulation of gene expression in response to changes in cell density is called quorum sensing. Catalyzes the transformation of S-ribosylhomocysteine (RHC) to homocysteine (HC) and 4,5-dihydroxy-2,3-pentadione (DPD). The chain is S-ribosylhomocysteine lyase from Neisseria meningitidis serogroup A / serotype 4A (strain DSM 15465 / Z2491).